The following is an 82-amino-acid chain: MRIMAKIGVENSLTDVQQALKQQGHEVVTLNSEQDAQGCDCCVVTGQDSNMMGIADASIKGSVITAHGLTTDEVCQQVESRT.

Belongs to the UPF0180 family.

This chain is UPF0180 protein BT9727_1277, found in Bacillus thuringiensis subsp. konkukian (strain 97-27).